A 538-amino-acid chain; its full sequence is Pyruvate kinase (538 aa).

Phosphoserine is present on S45. R72 is a substrate binding site. Positions 74, 76, 107, and 108 each coordinate K(+). 74 to 77 contacts ATP; that stretch reads NFSH. 2 residues coordinate ATP: R114 and K200. E265 serves as a coordination point for Mg(2+). The substrate site is built by G288, D289, and T321. Residue D289 coordinates Mg(2+).

It belongs to the pyruvate kinase family. In terms of assembly, homotetramer. Mg(2+) is required as a cofactor. K(+) serves as cofactor.

It catalyses the reaction pyruvate + ATP = phosphoenolpyruvate + ADP + H(+). The protein operates within carbohydrate degradation; glycolysis; pyruvate from D-glyceraldehyde 3-phosphate: step 5/5. The protein is Pyruvate kinase (pki1) of Hypocrea jecorina (Trichoderma reesei).